Consider the following 398-residue polypeptide: O-methyltransferase penC (398 aa).

Asp263 contributes to the S-adenosyl-L-methionine binding site. His305 serves as the catalytic Proton acceptor.

The protein belongs to the class I-like SAM-binding methyltransferase superfamily. Cation-independent O-methyltransferase family.

It participates in secondary metabolite biosynthesis. Its pathway is alkaloid biosynthesis. The protein operates within mycotoxin biosynthesis. Its function is as follows. O-methyltransferase; part of the gene cluster that mediates the biosynthesis of penigequinolones, potent insecticidal alkaloids that contain a highly modified 10-carbon prenyl group. The first stage is catalyzed by the nonribosomal peptide synthetase penN that condenses anthranilic acid and O-methyl-L-tyrosine to produce 4'-methoxycyclopeptin. 4'-methoxycyclopeptin is then converted to 4'-methoxydehydrocyclopeptin by the ketoglutarate-dependent dioxygenase penM through dehydrogenation to form a double bond between C-alpha and C-beta of the O-methyltyrosine side chain. PenM also converts its first product methoxydehydrocyclopeptin to 4'-methoxycyclopenin. The following conversion of 4'methoxycyclopenin into 4'-methoxyviridicatin is catalyzed by the cyclopenase penL. 4'-methoxyviridicatin is the precursor of quinolone natural products, and is further converted to quinolinone B. The prenyltransferase penI then catalyzes the canonical Friedel-Crafts alkylation of quinolinone B with dimethylallyl cation to yield dimethylallyl quinolone, which is subjected to FAD-dependent dehydrogenation by the FAD-linked oxidoreductase penH to yield conjugated aryl diene. The delta(3') double bond then serves as the site of the second alkylation with DMAPP catalyzed by the prenyltransferase penG to yield a carbenium ion intermediate, which can be attacked by H(2)O to yield a styrenyl quinolone containing a C3'-hydroxyprenyl chain, or undergo cyclization to yield yaequinolones J1 and J2. The conversion of the styrenyl quinolone into the tetrahydrofuran-containing yaequinolone C is performed by the FAD-dependent monooxygenase penE and involves epoxidation of the terminal C7'-C8' olefin, followed by epoxide ring opening initiated by the C3' hydroxyl group. The predicted cysteine hydrolase penJ acts as an epoxide hydrolase that enhances the rate of the 5-exo-tet cyclization step, increasing the yield of yaequinolone C. PenF catalyzes the cationic rearrangement of the epoxide formed by penE (before ring opening to produce yaequinolone C) into yaequinolone D. Finally, the short-chain dehydrogenase/reductase (SDR)-like reductase penD, catalyzes both the dehydration of yaequinolone D and the reduction of the resulting oxonium to yield penigequinolone. The sequence is that of O-methyltransferase penC from Penicillium thymicola.